We begin with the raw amino-acid sequence, 325 residues long: Cytochrome c biogenesis protein CcsA (325 aa).

8 helical membrane passes run 14-34, 36-56, 68-88, 97-117, 142-162, 233-253, 260-280, and 294-314; these read TFAILLPTLLCYWTGVAFPNL, GLPAIGTAGMAIANLCMAALL, ISNLYESLFFLAWGLTAIHLL, LVGAATSPLALGIVAFAAFTL, VMMVSYAALLVGSLLSVAFLV, VIGLGFPLLTIGIIAGAVWAN, WSWDPKETWALITWLVFAAYL, and AILATVGFGVVWVCYLGVNLL.

It belongs to the CcmF/CycK/Ccl1/NrfE/CcsA family. In terms of assembly, may interact with ccs1.

It is found in the cellular thylakoid membrane. Its function is as follows. Required during biogenesis of c-type cytochromes (cytochrome c6 and cytochrome f) at the step of heme attachment. The sequence is that of Cytochrome c biogenesis protein CcsA from Synechococcus sp. (strain ATCC 27144 / PCC 6301 / SAUG 1402/1) (Anacystis nidulans).